We begin with the raw amino-acid sequence, 95 residues long: MILQLFAHKKGVGSSRNGRDSESKRLGVKRSDGQFVLAGNILVRQRGTKIHPGANVGIGKDDTLFALIDGYVVFERKGRDKKQVSVYPERKVAQS.

Residues 1-6 constitute a propeptide that is removed on maturation; that stretch reads MILQLF.

The protein belongs to the bacterial ribosomal protein bL27 family. Post-translationally, the N-terminus is cleaved by ribosomal processing cysteine protease Prp.

The chain is Large ribosomal subunit protein bL27 from Caldanaerobacter subterraneus subsp. tengcongensis (strain DSM 15242 / JCM 11007 / NBRC 100824 / MB4) (Thermoanaerobacter tengcongensis).